The chain runs to 199 residues: Pyridoxal 5'-phosphate synthase subunit PdxT (199 aa).

52-54 (GES) provides a ligand contact to L-glutamine. Residue cysteine 84 is the Nucleophile of the active site. Residues arginine 115 and 143–144 (IR) each bind L-glutamine. Active-site charge relay system residues include histidine 179 and glutamate 181.

It belongs to the glutaminase PdxT/SNO family. As to quaternary structure, in the presence of PdxS, forms a dodecamer of heterodimers. Only shows activity in the heterodimer.

It catalyses the reaction aldehydo-D-ribose 5-phosphate + D-glyceraldehyde 3-phosphate + L-glutamine = pyridoxal 5'-phosphate + L-glutamate + phosphate + 3 H2O + H(+). The enzyme catalyses L-glutamine + H2O = L-glutamate + NH4(+). It participates in cofactor biosynthesis; pyridoxal 5'-phosphate biosynthesis. Catalyzes the hydrolysis of glutamine to glutamate and ammonia as part of the biosynthesis of pyridoxal 5'-phosphate. The resulting ammonia molecule is channeled to the active site of PdxS. This is Pyridoxal 5'-phosphate synthase subunit PdxT from Methanosarcina acetivorans (strain ATCC 35395 / DSM 2834 / JCM 12185 / C2A).